The sequence spans 391 residues: Putative protein PLEKHA9 (391 aa).

The chain is Putative protein PLEKHA9 (PLEKHA8P1) from Homo sapiens (Human).